The following is a 211-amino-acid chain: V-type ATP synthase subunit D (211 aa).

This sequence belongs to the V-ATPase D subunit family.

Produces ATP from ADP in the presence of a proton gradient across the membrane. This Enterococcus faecalis (strain ATCC 700802 / V583) protein is V-type ATP synthase subunit D.